The primary structure comprises 329 residues: Pantothenate kinase (329 aa).

A disordered region spans residues 1–22 (MPAQGPSHGELPPADAGRESSP). Position 107–114 (107–114 (GSVAVGKS)) interacts with ATP.

This sequence belongs to the prokaryotic pantothenate kinase family.

It is found in the cytoplasm. It catalyses the reaction (R)-pantothenate + ATP = (R)-4'-phosphopantothenate + ADP + H(+). It functions in the pathway cofactor biosynthesis; coenzyme A biosynthesis; CoA from (R)-pantothenate: step 1/5. In Nocardioides sp. (strain ATCC BAA-499 / JS614), this protein is Pantothenate kinase.